A 396-amino-acid polypeptide reads, in one-letter code: Ubiquitin-like modifier-activating enzyme 5 (396 aa).

Positions 76, 97, 120, 143, and 177 each coordinate ATP. Zn(2+) is bound by residues cysteine 219 and cysteine 222. Cysteine 243 functions as the Glycyl thioester intermediate in the catalytic mechanism. Zn(2+) contacts are provided by cysteine 296 and cysteine 301.

This sequence belongs to the ubiquitin-activating E1 family. UBA5 subfamily.

Functionally, E1-like enzyme which activates UFM1. The polypeptide is Ubiquitin-like modifier-activating enzyme 5 (Drosophila ananassae (Fruit fly)).